The primary structure comprises 51 residues: Large ribosomal subunit protein bL33 (51 aa).

It belongs to the bacterial ribosomal protein bL33 family.

This Colwellia psychrerythraea (strain 34H / ATCC BAA-681) (Vibrio psychroerythus) protein is Large ribosomal subunit protein bL33.